A 208-amino-acid polypeptide reads, in one-letter code: 3-demethoxyubiquinol 3-hydroxylase (208 aa).

Fe cation contacts are provided by Glu-57, Glu-87, His-90, Glu-139, Glu-171, and His-174.

Belongs to the COQ7 family. Requires Fe cation as cofactor.

It is found in the cell membrane. It catalyses the reaction a 5-methoxy-2-methyl-3-(all-trans-polyprenyl)benzene-1,4-diol + AH2 + O2 = a 3-demethylubiquinol + A + H2O. Its pathway is cofactor biosynthesis; ubiquinone biosynthesis. Catalyzes the hydroxylation of 2-nonaprenyl-3-methyl-6-methoxy-1,4-benzoquinol during ubiquinone biosynthesis. The sequence is that of 3-demethoxyubiquinol 3-hydroxylase from Burkholderia cenocepacia (strain ATCC BAA-245 / DSM 16553 / LMG 16656 / NCTC 13227 / J2315 / CF5610) (Burkholderia cepacia (strain J2315)).